Reading from the N-terminus, the 487-residue chain is UPF0324 membrane protein NE0724 (487 aa).

11 helical membrane-spanning segments follow: residues tryptophan 19–tryptophan 38, proline 71–methionine 93, phenylalanine 100–asparagine 119, leucine 139–phenylalanine 161, alanine 181–isoleucine 200, valine 204–glycine 226, valine 269–isoleucine 291, isoleucine 350–tyrosine 369, phenylalanine 389–serine 411, glycine 426–isoleucine 443, and alanine 456–phenylalanine 478.

Belongs to the UPF0324 family.

It localises to the cell membrane. The chain is UPF0324 membrane protein NE0724 from Nitrosomonas europaea (strain ATCC 19718 / CIP 103999 / KCTC 2705 / NBRC 14298).